Here is a 93-residue protein sequence, read N- to C-terminus: Pyrimidine/purine nucleoside phosphorylase (93 aa).

This sequence belongs to the nucleoside phosphorylase PpnP family.

It catalyses the reaction a purine D-ribonucleoside + phosphate = a purine nucleobase + alpha-D-ribose 1-phosphate. It carries out the reaction adenosine + phosphate = alpha-D-ribose 1-phosphate + adenine. The enzyme catalyses cytidine + phosphate = cytosine + alpha-D-ribose 1-phosphate. The catalysed reaction is guanosine + phosphate = alpha-D-ribose 1-phosphate + guanine. It catalyses the reaction inosine + phosphate = alpha-D-ribose 1-phosphate + hypoxanthine. It carries out the reaction thymidine + phosphate = 2-deoxy-alpha-D-ribose 1-phosphate + thymine. The enzyme catalyses uridine + phosphate = alpha-D-ribose 1-phosphate + uracil. The catalysed reaction is xanthosine + phosphate = alpha-D-ribose 1-phosphate + xanthine. Functionally, catalyzes the phosphorolysis of diverse nucleosides, yielding D-ribose 1-phosphate and the respective free bases. Can use uridine, adenosine, guanosine, cytidine, thymidine, inosine and xanthosine as substrates. Also catalyzes the reverse reactions. The protein is Pyrimidine/purine nucleoside phosphorylase of Cellvibrio japonicus (strain Ueda107) (Pseudomonas fluorescens subsp. cellulosa).